The chain runs to 397 residues: Phosphopentomutase (397 aa).

Asp-12, Asp-289, His-294, Asp-330, His-331, and His-342 together coordinate Mn(2+).

Belongs to the phosphopentomutase family. The cofactor is Mn(2+).

It is found in the cytoplasm. The enzyme catalyses 2-deoxy-alpha-D-ribose 1-phosphate = 2-deoxy-D-ribose 5-phosphate. It carries out the reaction alpha-D-ribose 1-phosphate = D-ribose 5-phosphate. It participates in carbohydrate degradation; 2-deoxy-D-ribose 1-phosphate degradation; D-glyceraldehyde 3-phosphate and acetaldehyde from 2-deoxy-alpha-D-ribose 1-phosphate: step 1/2. Its function is as follows. Isomerase that catalyzes the conversion of deoxy-ribose 1-phosphate (dRib-1-P) and ribose 1-phosphate (Rib-1-P) to deoxy-ribose 5-phosphate (dRib-5-P) and ribose 5-phosphate (Rib-5-P), respectively. This is Phosphopentomutase from Limosilactobacillus reuteri (strain DSM 20016) (Lactobacillus reuteri).